The chain runs to 117 residues: Inner kinetochore subunit MHF1 (117 aa).

Belongs to the TAF9 family. CENP-S/MHF1 subfamily. The MHF histone-fold complex is a heterotetramer of 2 MHF1-MHF2 heterodimers. Together with MPH1/FANCM, forms the FANCM-MHF complex. Component of the inner kinetochore constitutive centromere-associated network (CCAN).

Its function is as follows. dsDNA-binding component of a FANCM-MHF complex involved in DNA damage repair and genome maintenance. FANCM-MHF promotes gene conversion at blocked replication forks, probably by reversal of the stalled fork. Component of the kinetochore, a multiprotein complex that assembles on centromeric DNA and attaches chromosomes to spindle microtubules, mediating chromosome segregation and sister chromatid segregation during meiosis and mitosis. Component of the inner kinetochore constitutive centromere-associated network (CCAN), which serves as a structural platform for outer kinetochore assembly. The protein is Inner kinetochore subunit MHF1 of Candida albicans (strain SC5314 / ATCC MYA-2876) (Yeast).